A 146-amino-acid chain; its full sequence is Hemoglobin subunit beta (146 aa).

N-acetylvaline is present on Val-1. The region spanning 2–146 (HLTPDEKNAV…VANALAHKYH (145 aa)) is the Globin domain. The residue at position 12 (Thr-12) is a Phosphothreonine. Ser-44 carries the phosphoserine modification. Lys-59 carries the N6-acetyllysine modification. Residue His-63 coordinates heme b. Lys-82 is subject to N6-acetyllysine. His-92 provides a ligand contact to heme b. The residue at position 93 (Cys-93) is an S-nitrosocysteine. Lys-144 carries the N6-acetyllysine modification.

This sequence belongs to the globin family. In terms of assembly, heterotetramer of two alpha chains and two beta chains. In terms of tissue distribution, red blood cells.

In terms of biological role, involved in oxygen transport from the lung to the various peripheral tissues. In Piliocolobus badius (Western red colobus), this protein is Hemoglobin subunit beta (HBB).